Reading from the N-terminus, the 204-residue chain is INSIG protein homolog (204 aa).

5 consecutive transmembrane segments (helical) span residues 5 to 27 (ISEA…HSHV), 47 to 64 (FWFP…AELR), 76 to 97 (ARQA…ALVH), 101 to 118 (VVPV…TWCV), and 124 to 145 (GAAC…LVQL). Residue histidine 26 participates in a 1,2-diacyl-sn-glycerol binding. Tyrosine 150 contacts a 1,2-diacyl-sn-glycerol. The helical transmembrane segment at 162–179 (PFLAPLYFAFGVVAALLG) threads the bilayer.

It belongs to the INSIG family. In terms of assembly, homotrimer.

It is found in the membrane. Its function is as follows. Diacylglycerol-binding protein. The chain is INSIG protein homolog from Mycolicibacterium vanbaalenii (strain DSM 7251 / JCM 13017 / BCRC 16820 / KCTC 9966 / NRRL B-24157 / PYR-1) (Mycobacterium vanbaalenii).